Here is a 210-residue protein sequence, read N- to C-terminus: Chaperone protein TorD (210 aa).

The protein belongs to the TorD/DmsD family. TorD subfamily.

It localises to the cytoplasm. In terms of biological role, involved in the biogenesis of TorA. Acts on TorA before the insertion of the molybdenum cofactor and, as a result, probably favors a conformation of the apoenzyme that is competent for acquiring the cofactor. In Salmonella dublin (strain CT_02021853), this protein is Chaperone protein TorD.